The chain runs to 739 residues: Phosphoribosylformylglycinamidine synthase subunit PurL (739 aa).

Residue His-55 is part of the active site. ATP contacts are provided by Tyr-58 and Lys-97. Glu-99 is a binding site for Mg(2+). Residues 100–103 (SHNH) and Arg-122 each bind substrate. His-101 acts as the Proton acceptor in catalysis. A Mg(2+)-binding site is contributed by Asp-123. Gln-246 contacts substrate. Position 276 (Asp-276) interacts with Mg(2+). Residue 320–322 (ESQ) participates in substrate binding. ATP-binding residues include Asp-502 and Gly-539. A Mg(2+)-binding site is contributed by Asn-540. Ser-542 is a binding site for substrate.

It belongs to the FGAMS family. As to quaternary structure, monomer. Part of the FGAM synthase complex composed of 1 PurL, 1 PurQ and 2 PurS subunits.

It localises to the cytoplasm. The catalysed reaction is N(2)-formyl-N(1)-(5-phospho-beta-D-ribosyl)glycinamide + L-glutamine + ATP + H2O = 2-formamido-N(1)-(5-O-phospho-beta-D-ribosyl)acetamidine + L-glutamate + ADP + phosphate + H(+). It participates in purine metabolism; IMP biosynthesis via de novo pathway; 5-amino-1-(5-phospho-D-ribosyl)imidazole from N(2)-formyl-N(1)-(5-phospho-D-ribosyl)glycinamide: step 1/2. Functionally, part of the phosphoribosylformylglycinamidine synthase complex involved in the purines biosynthetic pathway. Catalyzes the ATP-dependent conversion of formylglycinamide ribonucleotide (FGAR) and glutamine to yield formylglycinamidine ribonucleotide (FGAM) and glutamate. The FGAM synthase complex is composed of three subunits. PurQ produces an ammonia molecule by converting glutamine to glutamate. PurL transfers the ammonia molecule to FGAR to form FGAM in an ATP-dependent manner. PurS interacts with PurQ and PurL and is thought to assist in the transfer of the ammonia molecule from PurQ to PurL. The polypeptide is Phosphoribosylformylglycinamidine synthase subunit PurL (Lactiplantibacillus plantarum (strain ATCC BAA-793 / NCIMB 8826 / WCFS1) (Lactobacillus plantarum)).